The chain runs to 369 residues: Peptide chain release factor 2 (369 aa).

Q252 is modified (N5-methylglutamine).

Belongs to the prokaryotic/mitochondrial release factor family. Methylated by PrmC. Methylation increases the termination efficiency of RF2.

The protein resides in the cytoplasm. In terms of biological role, peptide chain release factor 2 directs the termination of translation in response to the peptide chain termination codons UGA and UAA. The sequence is that of Peptide chain release factor 2 from Staphylococcus aureus (strain bovine RF122 / ET3-1).